Here is a 224-residue protein sequence, read N- to C-terminus: Urease accessory protein UreF (224 aa).

The protein belongs to the UreF family. UreD, UreF and UreG form a complex that acts as a GTP-hydrolysis-dependent molecular chaperone, activating the urease apoprotein by helping to assemble the nickel containing metallocenter of UreC. The UreE protein probably delivers the nickel.

The protein localises to the cytoplasm. Its function is as follows. Required for maturation of urease via the functional incorporation of the urease nickel metallocenter. In Escherichia coli O157:H7, this protein is Urease accessory protein UreF.